The chain runs to 1577 residues: Hemolysin (1577 aa).

An N-terminal signal peptide occupies residues 1–29; it reads MKSKNFKLSPSGRLAASLAIIFVSLNAYG. Residues 437 to 446 are compositionally biased toward basic and acidic residues; it reads EKESRSENGN. Disordered stretches follow at residues 437-467, 1081-1103, 1169-1188, and 1213-1232; these read EKES…QTET, TDTH…GTTP, QSAS…GVQA, and KQDE…SGNL. 3 stretches are compositionally biased toward polar residues: residues 454–467, 1081–1095, and 1169–1184; these read LESG…QTET, TDTH…NGSA, and QSAS…NLSG.

The protein localises to the cell outer membrane. Bacterial hemolysins are exotoxins that attack blood cell membranes and cause cell rupture by mechanisms not clearly defined. Functionally, cell-bound hemolysin, which releases heme-iron from erythrocytes by interaction with the erythrocyte membrane. HpmA requires HpmB function. This Proteus mirabilis protein is Hemolysin (hpmA).